Reading from the N-terminus, the 860-residue chain is JmjC domain-containing histone demethylation protein 1 (860 aa).

Disordered stretches follow at residues 1-45 (MSEQ…EEGK), 117-212 (STSP…PKRK), and 408-440 (DVKEKGRGNDSREGSEIRKEGSHLTEGDNGGEI). The PHD-type zinc-finger motif lies at 23 to 116 (PEPCPLCRET…KWYCAPCLAR (94 aa)). 2 stretches are compositionally biased toward basic and acidic residues: residues 183–192 (IDMKSEREQQ) and 408–433 (DVKEKGRGNDSREGSEIRKEGSHLTE). A JmjC domain is found at 416–579 (NDSREGSEIR…TQLRLRQIEI (164 aa)). Position 471 (Thr471) interacts with substrate. Fe cation-binding residues include His474 and Asp476. Lys491 serves as a coordination point for substrate. Residue His547 participates in Fe cation binding. 2 disordered regions span residues 744–795 (HPPA…ANEN) and 837–860 (GPKLDKEKISQPQGKVEEDMDIDH). The span at 750–763 (ENRQSPQIETTTVQ) shows a compositional bias: polar residues. A compositionally biased stretch (low complexity) spans 767 to 795 (PSTSSSDAISGSGPGASPGASANGGANEN).

Belongs to the JHDM1 histone demethylase family. Fe(2+) serves as cofactor.

The protein resides in the nucleus. The catalysed reaction is N(6),N(6)-dimethyl-L-lysyl(36)-[histone H3] + 2 2-oxoglutarate + 2 O2 = L-lysyl(36)-[histone H3] + 2 formaldehyde + 2 succinate + 2 CO2. Functionally, histone demethylase that specifically demethylates 'Lys-36' of histone H3, thereby playing a central role in histone code. This chain is JmjC domain-containing histone demethylation protein 1 (JHD1), found in Cryptococcus neoformans var. neoformans serotype D (strain JEC21 / ATCC MYA-565) (Filobasidiella neoformans).